An 85-amino-acid chain; its full sequence is Large ribosomal subunit protein bL27 (85 aa).

A disordered region spans residues 1 to 20 (MATKKAGGSTRNGRDSEAKR).

This sequence belongs to the bacterial ribosomal protein bL27 family.

This is Large ribosomal subunit protein bL27 from Actinobacillus succinogenes (strain ATCC 55618 / DSM 22257 / CCUG 43843 / 130Z).